The primary structure comprises 156 residues: ATP synthase subunit b (156 aa).

The chain crosses the membrane as a helical span at residues 7 to 29; that stretch reads LFGQTIAFAIFVWFCMKFVWPPL.

This sequence belongs to the ATPase B chain family. As to quaternary structure, F-type ATPases have 2 components, F(1) - the catalytic core - and F(0) - the membrane proton channel. F(1) has five subunits: alpha(3), beta(3), gamma(1), delta(1), epsilon(1). F(0) has three main subunits: a(1), b(2) and c(10-14). The alpha and beta chains form an alternating ring which encloses part of the gamma chain. F(1) is attached to F(0) by a central stalk formed by the gamma and epsilon chains, while a peripheral stalk is formed by the delta and b chains.

It localises to the cell inner membrane. In terms of biological role, f(1)F(0) ATP synthase produces ATP from ADP in the presence of a proton or sodium gradient. F-type ATPases consist of two structural domains, F(1) containing the extramembraneous catalytic core and F(0) containing the membrane proton channel, linked together by a central stalk and a peripheral stalk. During catalysis, ATP synthesis in the catalytic domain of F(1) is coupled via a rotary mechanism of the central stalk subunits to proton translocation. Its function is as follows. Component of the F(0) channel, it forms part of the peripheral stalk, linking F(1) to F(0). This is ATP synthase subunit b from Ectopseudomonas mendocina (strain ymp) (Pseudomonas mendocina).